Reading from the N-terminus, the 125-residue chain is Glycine cleavage system H protein (125 aa).

Residues 22-104 (SYVIGITDFA…YDTGWILKLE (83 aa)) form the Lipoyl-binding domain. Lysine 63 carries the N6-lipoyllysine modification.

This sequence belongs to the GcvH family. As to quaternary structure, the glycine cleavage system is composed of four proteins: P, T, L and H. (R)-lipoate is required as a cofactor.

Its function is as follows. The glycine cleavage system catalyzes the degradation of glycine. The H protein shuttles the methylamine group of glycine from the P protein to the T protein. Functionally, is also involved in protein lipoylation via its role as an octanoyl/lipoyl carrier protein intermediate. In Listeria monocytogenes serotype 4b (strain CLIP80459), this protein is Glycine cleavage system H protein.